The following is a 287-amino-acid chain: Toxin zeta (287 aa).

40–47 is an ATP binding site; sequence GQPGSGKT. Residues 250–287 form a disordered region; sequence MVQNQHQETPEFKAIQQKMESLQPPTPPIPKTPKLPGI. Pro residues predominate over residues 273–287; sequence PPTPPIPKTPKLPGI.

This sequence belongs to the zeta toxin family. In terms of assembly, in the presence of the epsilon antitoxin, forms an inactive PezA(2)PezT(2) heterotetramer.

The catalysed reaction is UDP-N-acetyl-alpha-D-glucosamine + ATP = UDP-N-acetyl-alpha-D-glucosamine 3'-phosphate + ADP + H(+). In terms of biological role, toxic component of a type II toxin-antitoxin (TA) system. Phosphorylates UDP-N-acetyl-D-glucosamine (UNAG) on the 3'-hydroxyl group of the N-acetyl-D-glucosamine moiety, yielding UNAG-3P. UNAG-3P inhibits MurA, the first committed step in cell wall synthesis, which is then blocked. Phosphorylation is inhibited by cognate epsilon antitoxin. Part of a postsegregational killing (PSK) system involved in the killing of plasmid-free cells. The zeta toxin induces programmed cell death. This chain is Toxin zeta, found in Streptococcus agalactiae.